The sequence spans 274 residues: Reaction center protein L chain (274 aa).

Over 2–32 (ALLSFERKYRVRGGTLIGGDLFDFWVGPYFV) the chain is Cytoplasmic. A helical transmembrane segment spans residues 33–53 (GFFGVSAIFFIFLGVSLIGYA). Residues 54 to 83 (ASQGPTWDPFAISINPPDLKYGLGAAPLLE) are Periplasmic-facing. A helical membrane pass occupies residues 84–111 (GGFWQAITVCALGAFISWMLREVEISRK). Topologically, residues 112–115 (LGIG) are cytoplasmic. Residues 116-139 (WHVPLAFCVPIFMFCVLQVFRPLL) form a helical membrane-spanning segment. Residues 140–170 (LGSWGHAFPYGILSHLDWVNNFGYQYLNWHY) lie on the Periplasmic side of the membrane. (7R,8Z)-bacteriochlorophyll b contacts are provided by His154 and His174. The helical transmembrane segment at 171–198 (NPGHMSSVSFLFVNAMALGLHGGLILSV) threads the bilayer. Position 191 (His191) interacts with Fe cation. Topologically, residues 199–225 (ANPGDGDKVKTAEHENQYFRDVVGYSI) are cytoplasmic. Phe217 lines the a ubiquinone pocket. The chain crosses the membrane as a helical span at residues 226–249 (GALSIHRLGLFLASNIFLTGAFGT). Position 231 (His231) interacts with Fe cation. Residues 250 to 274 (IASGPFWTRGWPEWWGWWLDIPFWS) are Periplasmic-facing.

The protein belongs to the reaction center PufL/M/PsbA/D family. As to quaternary structure, reaction center is composed of four bacteriochlorophylls, two bacteriopheophytins, two ubiquinones, one iron, and three highly hydrophobic polypeptide chains (designated L, M, and H).

The protein localises to the cellular chromatophore membrane. Functionally, the reaction center is a membrane-bound complex that mediates the initial photochemical event in the electron transfer process of photosynthesis. The sequence is that of Reaction center protein L chain (pufL) from Blastochloris viridis (Rhodopseudomonas viridis).